The chain runs to 156 residues: Fibroblast growth factor 2 (156 aa).

Residues 1–9 (MAAGSITTL) constitute a propeptide that is removed on maturation. Position 37 (Asn-37) interacts with heparin. Tyr-83 is subject to Phosphotyrosine; by TEC. Lys-96 participates in a covalent cross-link: Glycyl lysine isopeptide (Lys-Gly) (interchain with G-Cter in SUMO1). A heparin-binding region spans residues 129–145 (KRTGQYKLGSKTGPGQK).

Belongs to the heparin-binding growth factors family. In terms of assembly, monomer. Homodimer. Interacts with FGFR1, FGFR2, FGFR3 and FGFR4. Affinity between fibroblast growth factors (FGFs) and their receptors is increased by heparan sulfate glycosaminoglycans that function as coreceptors. Interacts with CSPG4, FGFBP1 and TEC. Found in a complex with FGFBP1, FGF1 and FGF2. Interacts with FGFBP3. Interacts with integrin ITGAV:ITGB3; the interaction is required for FGF2 signaling. Interacts with SNORC (via the extracellular domain). Interacts with glypican GPC3. In terms of processing, phosphorylation at Tyr-83 regulates FGF2 unconventional secretion.

It is found in the secreted. The protein resides in the nucleus. Its function is as follows. Acts as a ligand for FGFR1, FGFR2, FGFR3 and FGFR4. Also acts as an integrin ligand which is required for FGF2 signaling. Binds to integrin ITGAV:ITGB3. Plays an important role in the regulation of cell survival, cell division, cell differentiation and cell migration. Functions as a potent mitogen in vitro. Can induce angiogenesis. Mediates phosphorylation of ERK1/2 and thereby promotes retinal lens fiber differentiation. This chain is Fibroblast growth factor 2 (FGF2), found in Monodelphis domestica (Gray short-tailed opossum).